We begin with the raw amino-acid sequence, 234 residues long: Uridylate kinase (234 aa).

9-12 (KLSG) is a binding site for ATP. Gly51 contacts UMP. Gly52 and Arg56 together coordinate ATP. Residues Asp71 and 132–139 (CGNPFFTT) contribute to the UMP site. ATP-binding residues include Thr159, Tyr165, and Asp168.

It belongs to the UMP kinase family. In terms of assembly, homohexamer.

The protein resides in the cytoplasm. The enzyme catalyses UMP + ATP = UDP + ADP. It participates in pyrimidine metabolism; CTP biosynthesis via de novo pathway; UDP from UMP (UMPK route): step 1/1. Inhibited by UTP. Functionally, catalyzes the reversible phosphorylation of UMP to UDP. This chain is Uridylate kinase, found in Prochlorococcus marinus (strain MIT 9215).